The chain runs to 755 residues: Xaa-Pro dipeptidyl-peptidase (755 aa).

Residues serine 348, aspartate 468, and histidine 498 each act as charge relay system in the active site.

The protein belongs to the peptidase S15 family. As to quaternary structure, homodimer.

The protein localises to the cytoplasm. It carries out the reaction Hydrolyzes Xaa-Pro-|- bonds to release unblocked, N-terminal dipeptides from substrates including Ala-Pro-|-p-nitroanilide and (sequentially) Tyr-Pro-|-Phe-Pro-|-Gly-Pro-|-Ile.. Its function is as follows. Removes N-terminal dipeptides sequentially from polypeptides having unsubstituted N-termini provided that the penultimate residue is proline. The sequence is that of Xaa-Pro dipeptidyl-peptidase from Streptococcus thermophilus (strain CNRZ 1066).